We begin with the raw amino-acid sequence, 444 residues long: Trigger factor (444 aa).

The 86-residue stretch at 165–250 folds into the PPIase FKBP-type domain; sequence GDFAKFDFEG…LHEIQELKIP (86 aa).

This sequence belongs to the FKBP-type PPIase family. Tig subfamily.

Its subcellular location is the cytoplasm. It carries out the reaction [protein]-peptidylproline (omega=180) = [protein]-peptidylproline (omega=0). Involved in protein export. Acts as a chaperone by maintaining the newly synthesized protein in an open conformation. Functions as a peptidyl-prolyl cis-trans isomerase. The chain is Trigger factor (tig) from Campylobacter jejuni subsp. jejuni serotype O:2 (strain ATCC 700819 / NCTC 11168).